A 200-amino-acid polypeptide reads, in one-letter code: Serine/arginine-rich splicing factor RSZ23 (200 aa).

One can recognise an RRM domain in the interval 2–71 (ARVYVGNLDP…NGWRVELSTK (70 aa)). The CCHC-type zinc finger occupies 86–103 (MKCYECGEPGHFARECRL). A disordered region spans residues 105 to 200 (IGSGGLGSGR…REESPYANNA (96 aa)). The segment covering 113 to 139 (GRRRSRSRSRSPRYRGRSRSRSPRYRR) has biased composition (basic residues).

This sequence belongs to the splicing factor SR family. Post-translationally, extensively phosphorylated on serine residues in the RS domain. As to expression, expressed in roots, leaves and immature seeds.

The protein localises to the nucleus. Functionally, involved in pre-mRNA splicing. In protoplast assay, enhances splicing efficiency of WAXY intron 1 and alters the selection of the 5'-splice sites by stimulating site 1 (proximal site). The sequence is that of Serine/arginine-rich splicing factor RSZ23 (RSZ23) from Oryza sativa subsp. japonica (Rice).